The following is a 64-amino-acid chain: Conotoxin VnMLCL-033 (64 aa).

A signal peptide spans methionine 1–proline 19. Positions asparagine 20–aspartate 43 are excised as a propeptide. The residue at position 63 (isoleucine 63) is an Isoleucine amide.

Belongs to the conotoxin T superfamily. Expressed by the venom duct.

It is found in the secreted. This Conus ventricosus (Mediterranean cone) protein is Conotoxin VnMLCL-033.